A 442-amino-acid polypeptide reads, in one-letter code: Terpene cyclase aneC (442 aa).

4 residues coordinate Mg(2+): aspartate 196, asparagine 327, serine 331, and glutamate 335. (2E,6E)-farnesyl diphosphate-binding residues include arginine 419 and tyrosine 420.

This sequence belongs to the terpene synthase family. Homodimer. Mg(2+) is required as a cofactor.

It catalyses the reaction (2E,6E)-farnesyl diphosphate = dauca-4,7-diene + diphosphate. The protein operates within secondary metabolite biosynthesis. In terms of biological role, terpene cyclase; part of the gene cluster that mediates the biosynthesis of aculenes, a unique type of norsesquiterpenes that contain a nordaucane skeleton linked to an L-proline moiety and are of mixed biosynthetic origin. The pathway begins with the synthesis of dauca-4,7-diene by the terpene cyclase aneC using farnesyl pyrophosphate (FPP) as substrate. The cytochrome P450 monooxygenase aneF then performs the initial oxidation at C-12 of dauca-4,7-diene to yield asperaculane D. Asperaculane D is substrate of the cytochrome P450 monooxygenase aneD for C-10 hydroxylation to yield asperaculane E. The cytochrome P450 monooxygenase aneG then converts asperaculane E into aculene D via C-2 oxidation. The monomodular nonribosomal peptide synthtase aneB adenylates L-proline and the thiohydrolase aneE transfers this activated L-proline derivative to aculenes D and C to produce respectively aculenes B and A. The dioxygenase aneA converts aculene D into aculene C, and aculene B into aculene A by introducing the 5,6-alkene moiety. Asperculanes A, B, C and F, as well as 14-prolyl asperculane C, might be shunt products of the pathway. The polypeptide is Terpene cyclase aneC (Aspergillus aculeatus (strain ATCC 16872 / CBS 172.66 / WB 5094)).